The following is a 529-amino-acid chain: BTB/POZ domain-containing protein 6 (529 aa).

One can recognise a BTB domain in the interval 127-197 (ADVHFIVGPA…LYSDEIDLEA (71 aa)).

As to quaternary structure, homodimer and heterodimer. Interacts with cul3 via the BTB domain.

It localises to the cytoplasm. Adapter protein for the cul3 E3 ubiquitin-protein ligase complex. Involved in late neuronal development and muscle formation. The polypeptide is BTB/POZ domain-containing protein 6 (btbd6) (Xenopus laevis (African clawed frog)).